We begin with the raw amino-acid sequence, 1498 residues long: Golgin subfamily A member 3 (1498 aa).

Position 1 is an N-acetylmethionine (methionine 1). Residues 1-118 (MDGASAEQDG…GTSAEGSVRK (118 aa)) are disordered. Position 18 is a phosphoserine (serine 18). Positions 27–36 (PLKPPGPLVP) are enriched in pro residues. A Phosphoserine modification is found at serine 57. The segment covering 71–81 (PTPPFPDPPSS) has biased composition (pro residues). An interaction with GOPC region spans residues 121–141 (LQSLRLSLPMQETQLCSTDSP). 2 disordered regions span residues 166–195 (RVKR…MLNP) and 216–325 (SVPR…SAST). The tract at residues 172 to 257 (ERSSQPATKT…DYRTEDSNAG (86 aa)) is golgi-targeting domain. Polar residues-rich tracts occupy residues 173-184 (RSSQPATKTRLF) and 269-291 (TKGS…SLSP). Serine 272 carries the post-translational modification Phosphoserine. The segment covering 315 to 324 (SDSSSYSSAS) has biased composition (low complexity). A phosphoserine mark is found at serine 385, serine 389, and serine 465. Residues 394-1459 (VSLESSAAET…ALTVHESLSS (1066 aa)) are a coiled coil. The span at 789–801 (KEELDRGARRLEE) shows a compositional bias: basic and acidic residues. 4 disordered regions span residues 789–809 (KEEL…TSET), 974–993 (QKQK…KEMK), 1376–1400 (RGAA…PIKI), and 1440–1498 (DSLQ…GPGE). At serine 983 the chain carries Phosphoserine. Basic and acidic residues predominate over residues 1376–1387 (RGAAKTRKEPKG). A Phosphoserine modification is found at serine 1392. The segment covering 1440-1452 (DSLQRQMEEHALT) has biased composition (basic and acidic residues).

As to quaternary structure, homodimer. Interacts with GOLGA7. Isoform 1 interacts with GOPC while isoform 3 does not. Cleaved by caspases in apoptotic cells. As to expression, expressed in all tissues tested. Expressed in liver, testis, lung, heart, salivary gland and kidney.

Its subcellular location is the cytoplasm. It localises to the golgi apparatus. The protein localises to the golgi stack membrane. Functionally, golgi auto-antigen; probably involved in maintaining Golgi structure. The polypeptide is Golgin subfamily A member 3 (GOLGA3) (Homo sapiens (Human)).